The following is a 315-amino-acid chain: Voltage-dependent calcium channel gamma-3 subunit (315 aa).

Helical transmembrane passes span 8–28 (VQML…TIAV), 104–124 (SSVF…CVAA), 135–155 (ILSA…GIIV), and 181–201 (FGAF…HIYI). The segment at 232-252 (RRRSSSRSTEPRSRDLSPISK) is disordered. S248 carries the post-translational modification Phosphoserine.

The protein belongs to the PMP-22/EMP/MP20 family. CACNG subfamily. As to quaternary structure, the L-type calcium channel is composed of five subunits: alpha-1, alpha-2/delta, beta and gamma. Acts as an auxiliary subunit for AMPA-selective glutamate receptors (AMPARs). Found in a complex with GRIA1, GRIA2, GRIA3, GRIA4, CNIH2, CNIH3, CACNG2, CACNG4, CACNG5, CACNG7 and CACNG8. Interacts with AP4M1 and GRIA1; associates GRIA1 with the adaptor protein complex 4 (AP-4) to target GRIA1 to the somatodendritic compartment of neurons.

The protein resides in the membrane. In terms of biological role, regulates the trafficking and gating properties of AMPA-selective glutamate receptors (AMPARs). Promotes their targeting to the cell membrane and synapses and modulates their gating properties by slowing their rates of activation, deactivation and desensitization. Does not show subunit-specific AMPA receptor regulation and regulates all AMPAR subunits. Thought to stabilize the calcium channel in an inactivated (closed) state. The chain is Voltage-dependent calcium channel gamma-3 subunit (CACNG3) from Bos taurus (Bovine).